We begin with the raw amino-acid sequence, 381 residues long: Succinate--CoA ligase [ADP-forming] subunit beta (381 aa).

One can recognise an ATP-grasp domain in the interval 9–236 (KTIFADAGIP…ESYEDDLERK (228 aa)). ATP contacts are provided by residues Lys45, 52 to 54 (GRG), Glu91, Val94, and Glu99. Mg(2+) contacts are provided by Asn191 and Asp205. Residues Asn256 and 313 to 315 (GIT) each bind substrate.

It belongs to the succinate/malate CoA ligase beta subunit family. Heterotetramer of two alpha and two beta subunits. Mg(2+) serves as cofactor.

It carries out the reaction succinate + ATP + CoA = succinyl-CoA + ADP + phosphate. The enzyme catalyses GTP + succinate + CoA = succinyl-CoA + GDP + phosphate. The protein operates within carbohydrate metabolism; tricarboxylic acid cycle; succinate from succinyl-CoA (ligase route): step 1/1. Functionally, succinyl-CoA synthetase functions in the citric acid cycle (TCA), coupling the hydrolysis of succinyl-CoA to the synthesis of either ATP or GTP and thus represents the only step of substrate-level phosphorylation in the TCA. The beta subunit provides nucleotide specificity of the enzyme and binds the substrate succinate, while the binding sites for coenzyme A and phosphate are found in the alpha subunit. This Halorubrum lacusprofundi (strain ATCC 49239 / DSM 5036 / JCM 8891 / ACAM 34) protein is Succinate--CoA ligase [ADP-forming] subunit beta.